We begin with the raw amino-acid sequence, 163 residues long: SsrA-binding protein (163 aa).

Basic and acidic residues predominate over residues 138–157 (EDRRGAIAERESKREMDRAL). A disordered region spans residues 138 to 163 (EDRRGAIAERESKREMDRALARGRRR).

It belongs to the SmpB family.

The protein localises to the cytoplasm. In terms of biological role, required for rescue of stalled ribosomes mediated by trans-translation. Binds to transfer-messenger RNA (tmRNA), required for stable association of tmRNA with ribosomes. tmRNA and SmpB together mimic tRNA shape, replacing the anticodon stem-loop with SmpB. tmRNA is encoded by the ssrA gene; the 2 termini fold to resemble tRNA(Ala) and it encodes a 'tag peptide', a short internal open reading frame. During trans-translation Ala-aminoacylated tmRNA acts like a tRNA, entering the A-site of stalled ribosomes, displacing the stalled mRNA. The ribosome then switches to translate the ORF on the tmRNA; the nascent peptide is terminated with the 'tag peptide' encoded by the tmRNA and targeted for degradation. The ribosome is freed to recommence translation, which seems to be the essential function of trans-translation. This is SsrA-binding protein from Anaeromyxobacter dehalogenans (strain 2CP-1 / ATCC BAA-258).